Here is a 256-residue protein sequence, read N- to C-terminus: Small ribosomal subunit protein eS1 (256 aa).

The residue at position 2 (alanine 2) is an N-acetylalanine; partial.

It belongs to the eukaryotic ribosomal protein eS1 family. In terms of assembly, component of the small ribosomal subunit. Mature ribosomes consist of a small (40S) and a large (60S) subunit. The 40S subunit contains about 33 different proteins and 1 molecule of RNA (18S). The 60S subunit contains about 49 different proteins and 3 molecules of RNA (25S, 5.8S and 5S).

Its subcellular location is the cytoplasm. In Laccaria bicolor (strain S238N-H82 / ATCC MYA-4686) (Bicoloured deceiver), this protein is Small ribosomal subunit protein eS1.